An 838-amino-acid chain; its full sequence is V-type proton ATPase 116 kDa subunit a 1 (838 aa).

At 1–388 (MGELFRSEEM…DAYGIGTYRE (388 aa)) the chain is on the cytoplasmic side. Phosphothreonine is present on residues threonine 250 and threonine 360. Tyrosine 364 carries the phosphotyrosine modification. Residues 389–407 (INPAPYTIITFPFLFAVMF) traverse the membrane as a helical segment. Residues 408–409 (GD) lie on the Vacuolar side of the membrane. The chain crosses the membrane as a helical span at residues 410–426 (LGHGILMTLFAVWMVLK). At 427–441 (ESRILSQKNENEMFS) the chain is on the cytoplasmic side. The helical transmembrane segment at 442-471 (TIFSGRYIILLMGVFSIYTGLIYNDCFSKS) threads the bilayer. Residues 472-535 (LNIFGSSWSV…ATNKLTFLNS (64 aa)) lie on the Vacuolar side of the membrane. Residues 536 to 555 (FKMKMSVILGIIHMLFGVSL) traverse the membrane as a helical segment. At 556 to 573 (SLFNHTYFKKPLNIYFGF) the chain is on the cytoplasmic side. The chain crosses the membrane as a helical span at residues 574–594 (IPEIIFMTSLFGYLVILIFYK). Topologically, residues 595–639 (WTAYNAKTSEKAPSLLIHFINMFLFSYGDSGNSMLYSGQKGIQCF) are vacuolar. A helical membrane pass occupies residues 640-659 (LVVVALLCVPWMLLFKPLVL). The Cytoplasmic segment spans residues 660–725 (RRQYLRRKHL…DTMVHQAIHT (66 aa)). The helical transmembrane segment at 726–750 (IEYCLGCISNTASYLRLWALSLAHA) threads the bilayer. The Vacuolar segment spans residues 751-771 (QLSEVLWTMVIHIGLKVKSLA). The chain crosses the membrane as a helical span at residues 772–810 (GGLALFFIFAAFATLTVAILLIMEGLSAFLHALRLHWVE). Over 811 to 838 (FQNKFYSGTGFKFLPFSFEHIREGKFDD) the chain is Cytoplasmic.

The protein belongs to the V-ATPase 116 kDa subunit family. As to quaternary structure, V-ATPase is a heteromultimeric enzyme made up of two complexes: the ATP-hydrolytic V1 complex and the proton translocation V0 complex. The V1 complex consists of three catalytic AB heterodimers that form a heterohexamer, three peripheral stalks each consisting of EG heterodimers, one central rotor including subunits D and F, and the regulatory subunits C and H. The proton translocation complex V0 consists of the proton transport subunit a, a ring of proteolipid subunits c9c'', rotary subunit d, subunits e and f, and the accessory subunits ATP6AP1/Ac45 and ATP6AP2/PRR. Interacts with SPAAR. As to expression, expressed in brain (at protein level). In terms of tissue distribution, expressed heart, kidney, liver, spleen, and to a lesser extent in brain.

The protein localises to the cytoplasmic vesicle. It is found in the clathrin-coated vesicle membrane. Its subcellular location is the secretory vesicle. It localises to the synaptic vesicle membrane. The protein resides in the melanosome. Functionally, subunit of the V0 complex of vacuolar(H+)-ATPase (V-ATPase), a multisubunit enzyme composed of a peripheral complex (V1) that hydrolyzes ATP and a membrane integral complex (V0) that translocates protons. V-ATPase is responsible for the acidification of various organelles, such as lysosomes, endosomes, the trans-Golgi network, and secretory granules, including synaptic vesicles. In certain cell types, can be exported to the plasma membrane, where it is involved in the acidification of the extracellular environment. Required for assembly and activity of the vacuolar ATPase. Through its action on compartment acidification, plays an essential role in neuronal development in terms of integrity and connectivity of neurons. This Bos taurus (Bovine) protein is V-type proton ATPase 116 kDa subunit a 1 (ATP6V0A1).